A 600-amino-acid polypeptide reads, in one-letter code: ATP-dependent lipid A-core flippase (600 aa).

4 helical membrane passes run 27–47, 83–103, 174–194, and 267–287; these read ISLF…QPML, LLII…NYFL, LLFM…LIAV, and PLLQ…VLYL. The 292-residue stretch at 31 to 322 folds into the ABC transmembrane type-1 domain; that stretch reads LISIVGFLIF…LSEVSSTIQK (292 aa). The region spanning 354–590 is the ABC transporter domain; that stretch reads LDVRNLSFTY…NGYYARLNAM (237 aa). 388–395 is an ATP binding site; sequence GRSGSGKS.

This sequence belongs to the ABC transporter superfamily. Lipid exporter (TC 3.A.1.106) family. In terms of assembly, homodimer.

It is found in the cell inner membrane. It catalyses the reaction ATP + H2O + lipid A-core oligosaccharideSide 1 = ADP + phosphate + lipid A-core oligosaccharideSide 2.. In terms of biological role, involved in lipopolysaccharide (LPS) biosynthesis. Translocates lipid A-core from the inner to the outer leaflet of the inner membrane. Transmembrane domains (TMD) form a pore in the inner membrane and the ATP-binding domain (NBD) is responsible for energy generation. This is ATP-dependent lipid A-core flippase from Pseudomonas fluorescens (strain Pf0-1).